The chain runs to 637 residues: MNANPKFLSATATVDEASIQPLPNSRKIYIEGSRPDIRVPMREITQSDTAASFGFEKNPPIYVYDTSGPYTDPAAKIDIRSGLDTPRLPWILERNDTEELPGPTSEYGIERLNDPKLAELRFNLHRKPRRALAGKNVSQMHYARQGIITPEMEFVAIRENMNRRAYLEELKKSGPKGEKLAELMGRQHPGQSFGAAIPQEITAEFVRSEIARGRAIIPANINHPEIEPMIIGRNFLVKINANIGNSAVTSSIGEEVEKMTWAIRWGGDNVMDLSTGKHIHETREWIIRNSPVPIGTVPIYQALEKVNGKAEDLTWEIFRDTLIEQAEQGVDYFTIHAGVLLRYVPMTAKRMTGIVSRGGSIMAKWCLAHHKESFLYEHFEDICEIMKAYDVSFSLGDGLRPGSIYDANDEAQLGELKTLGELTQIAWKHDVQVMIEGPGHVPMHLIKENMDLQLEQCHEAPFYTLGPLTTDIAPGYDHITSGIGAAQIGWYGTAMLCYVTPKEHLGLPNKVDVKDGIITYKIAAHAADLAKGHIGAQIRDNALSKARFEFRWEDQFNIGLDPDKAREFHDETLPKDSAKVAHFCSMCGPHFCSMKITQEVRDYAAKQGITEIQALKAGMEVKAIEFVKSGSEIYQKQ.

Substrate contacts are provided by residues Asn-242, Met-271, Tyr-300, His-336, 356–358 (SRG), 397–400 (DGLR), and Glu-436. His-440 contacts Zn(2+). Substrate is bound at residue Tyr-463. His-504 contributes to the Zn(2+) binding site. Positions 584, 587, and 592 each coordinate [4Fe-4S] cluster.

This sequence belongs to the ThiC family. In terms of assembly, homodimer. Requires [4Fe-4S] cluster as cofactor.

The catalysed reaction is 5-amino-1-(5-phospho-beta-D-ribosyl)imidazole + S-adenosyl-L-methionine = 4-amino-2-methyl-5-(phosphooxymethyl)pyrimidine + CO + 5'-deoxyadenosine + formate + L-methionine + 3 H(+). It participates in cofactor biosynthesis; thiamine diphosphate biosynthesis. Functionally, catalyzes the synthesis of the hydroxymethylpyrimidine phosphate (HMP-P) moiety of thiamine from aminoimidazole ribotide (AIR) in a radical S-adenosyl-L-methionine (SAM)-dependent reaction. The chain is Phosphomethylpyrimidine synthase from Janthinobacterium sp. (strain Marseille) (Minibacterium massiliensis).